The primary structure comprises 427 residues: NADPH-dependent stearoyl-CoA 9-desaturase (427 aa).

Fe cation-binding residues include histidine 90, histidine 94, histidine 125, histidine 129, histidine 130, histidine 304, histidine 308, and histidine 309.

Belongs to the fatty acid desaturase type 1 family. Interacts with the electron transfer protein Rv3230c to form a functional acyl-CoA desaturase complex. Requires Fe(2+) as cofactor. In terms of processing, is rapidly degraded by a mycobacterial protein degradation system that specifically targets the residues LAA at the C-terminus, leading to a post-translational proteolytic regulation of DesA3 essential activity.

Its subcellular location is the cell membrane. The enzyme catalyses octadecanoyl-CoA + NADPH + O2 + H(+) = (9Z)-octadecenoyl-CoA + NADP(+) + 2 H2O. It participates in lipid metabolism; fatty acid metabolism. Its function is as follows. Is likely involved in the aerobic desaturation system responsible for the synthesis of oleic acid from stearoyl-CoA; oleic acid is a precursor of mycobacterial membrane phospholipids and triglycerides. Catalyzes the conversion of stearoyl-CoA to oleoyl-CoA by introduction of a cis double bond between carbons 9 and 10 of the acyl chain. Requires the electron transfer partner Rv3230c to pass two electrons from NADPH to its active site diiron center. Is also able to catalyze the 9-desaturation of palmitoyl-CoA to palmitoleoyl-CoA. This Mycobacterium tuberculosis (strain CDC 1551 / Oshkosh) protein is NADPH-dependent stearoyl-CoA 9-desaturase (desA3).